The sequence spans 786 residues: UPF0313 protein SO_0311 (786 aa).

Residues 371–649 (AYDMIKTSIN…KALLRYHDPA (279 aa)) enclose the Radical SAM core domain. Residues Cys-385, Cys-389, and Cys-392 each contribute to the [4Fe-4S] cluster site. Disordered stretches follow at residues 669–688 (NSPNHLVPPEGRNERGPKWM) and 698–786 (LTRF…QQAK). Composition is skewed to basic and acidic residues over residues 679-688 (GRNERGPKWM) and 706-717 (FDERKGKGDAKG). A compositionally biased stretch (low complexity) spans 718 to 731 (KPSASKPKGPKSGA). Polar residues predominate over residues 732 to 741 (NAPQSQQPKT).

The protein belongs to the UPF0313 family. [4Fe-4S] cluster serves as cofactor.

The sequence is that of UPF0313 protein SO_0311 from Shewanella oneidensis (strain ATCC 700550 / JCM 31522 / CIP 106686 / LMG 19005 / NCIMB 14063 / MR-1).